The primary structure comprises 858 residues: Elongation factor 2 (858 aa).

Residues 17 to 362 (ANIRNMSVIA…MITIHLPSPV (346 aa)) enclose the tr-type G domain. Residue 26 to 33 (AHVDHGKS) coordinates GTP. The residue at position 54 (T54) is a Phosphothreonine. Residue T57 is modified to Phosphothreonine; by EEF2K. A Phosphothreonine modification is found at T59. The residue at position 152 (K152) is an N6-succinyllysine. GTP-binding positions include 158-161 (NKMD) and 216-218 (SGL). The residue at position 235 (K235) is an N6-acetyllysine. K239 bears the N6-acetyllysine; alternate mark. K239 is covalently cross-linked (Glycyl lysine isopeptide (Lys-Gly) (interchain with G-Cter in SUMO1); alternate). Y265 carries the post-translational modification Phosphotyrosine; by CSK. The residue at position 272 (K272) is an N6-acetyllysine; alternate. K272 is modified (N6-succinyllysine; alternate). K275 carries the N6-acetyllysine modification. A Glycyl lysine isopeptide (Lys-Gly) (interchain with G-Cter in SUMO) cross-link involves residue K322. S325 is modified (phosphoserine). At Y373 the chain carries Phosphotyrosine; by CSK. T435 is modified (phosphothreonine). N6-acetyllysine is present on residues K439 and K445. S502 is modified (phosphoserine). Residue K525 is modified to N6,N6,N6-trimethyllysine; by EEF2KMT. K529 is covalently cross-linked (Glycyl lysine isopeptide (Lys-Gly) (interchain with G-Cter in SUMO)). Position 572 is an N6-succinyllysine (K572). Position 595 is a phosphoserine; by CDK2 (S595). K619 bears the N6-acetyllysine mark. Diphthamide is present on H715.

It belongs to the TRAFAC class translation factor GTPase superfamily. Classic translation factor GTPase family. EF-G/EF-2 subfamily. As to quaternary structure, binds to 80S ribosomes. Actively translating ribosomes show mutually exclusive binding of eIF5a (EIF5A or EIF5A2) and EEF2/eEF2. Interacts with SERBP1; interaction sequesters EEF2/eEF2 at the A-site of the ribosome, thereby blocking the interaction sites of the mRNA-tRNA complex, promoting ribosome stabilization and hibernation. Interacts with HABP4; interaction takes place at the A-site of hibernating ribosomes and promotes ribosome stabilization. Component of the mRNA surveillance SURF complex, at least composed of ERF1, ERF3 (ERF3A or ERF3B), EEF2, UPF1/RENT1, SMG1, SMG8 and SMG9. Interacts with RBPMS2. Phosphorylation by EF-2 kinase completely inactivates EF-2; it requires prior phosphorylation by CDK2 at Ser-595 during mitotic prometaphase. Phosphorylation by CSK promotes SUMOylation, proteolytic cleavage, and nuclear translocation if the C-terminal fragment. In terms of processing, diphthamide is 2-[3-carboxyamido-3-(trimethyl-ammonio)propyl]histidine. Post-translationally, ISGylated. Proteolytically processed at two sites following phosphorylation by CSK. In terms of processing, SUMOylated following phosphorylation by CSK, promotes proteolytic cleavage.

It is found in the cytoplasm. It localises to the nucleus. It catalyses the reaction GTP + H2O = GDP + phosphate + H(+). In terms of biological role, catalyzes the GTP-dependent ribosomal translocation step during translation elongation. During this step, the ribosome changes from the pre-translocational (PRE) to the post-translocational (POST) state as the newly formed A-site-bound peptidyl-tRNA and P-site-bound deacylated tRNA move to the P and E sites, respectively. Catalyzes the coordinated movement of the two tRNA molecules, the mRNA and conformational changes in the ribosome. In Mus musculus (Mouse), this protein is Elongation factor 2 (Eef2).